The sequence spans 284 residues: Bifunctional protein FolD (284 aa).

NADP(+) contacts are provided by residues 165-167, Ser-190, and Ile-231; that span reads GRS.

Belongs to the tetrahydrofolate dehydrogenase/cyclohydrolase family. In terms of assembly, homodimer.

It catalyses the reaction (6R)-5,10-methylene-5,6,7,8-tetrahydrofolate + NADP(+) = (6R)-5,10-methenyltetrahydrofolate + NADPH. The catalysed reaction is (6R)-5,10-methenyltetrahydrofolate + H2O = (6R)-10-formyltetrahydrofolate + H(+). The protein operates within one-carbon metabolism; tetrahydrofolate interconversion. In terms of biological role, catalyzes the oxidation of 5,10-methylenetetrahydrofolate to 5,10-methenyltetrahydrofolate and then the hydrolysis of 5,10-methenyltetrahydrofolate to 10-formyltetrahydrofolate. The polypeptide is Bifunctional protein FolD (Streptococcus thermophilus (strain CNRZ 1066)).